Consider the following 495-residue polypeptide: Cysteine--tRNA ligase (495 aa).

Cysteine 35 serves as a coordination point for Zn(2+). The 'HIGH' region motif lies at 37 to 47; the sequence is PTVYSNVHLGN. Positions 230, 255, and 259 each coordinate Zn(2+). A 'KMSKS' region motif is present at residues 287–291; that stretch reads KMSKS. Lysine 290 contacts ATP.

It belongs to the class-I aminoacyl-tRNA synthetase family. Monomer. Requires Zn(2+) as cofactor.

It is found in the cytoplasm. It carries out the reaction tRNA(Cys) + L-cysteine + ATP = L-cysteinyl-tRNA(Cys) + AMP + diphosphate. This Flavobacterium psychrophilum (strain ATCC 49511 / DSM 21280 / CIP 103535 / JIP02/86) protein is Cysteine--tRNA ligase.